Here is a 303-residue protein sequence, read N- to C-terminus: 2-phospho-L-lactate transferase (303 aa).

Positions 48 and 87 each coordinate 7,8-didemethyl-8-hydroxy-5-deazariboflavin.

It belongs to the CofD family. As to quaternary structure, homodimer. Requires Mg(2+) as cofactor.

The enzyme catalyses (2S)-lactyl-2-diphospho-5'-guanosine + 7,8-didemethyl-8-hydroxy-5-deazariboflavin = oxidized coenzyme F420-0 + GMP + H(+). Its pathway is cofactor biosynthesis; coenzyme F420 biosynthesis. In terms of biological role, catalyzes the transfer of the 2-phospholactate moiety from (2S)-lactyl-2-diphospho-5'-guanosine to 7,8-didemethyl-8-hydroxy-5-deazariboflavin (FO) with the formation of oxidized coenzyme F420-0 and GMP. The chain is 2-phospho-L-lactate transferase from Methanosarcina mazei (strain ATCC BAA-159 / DSM 3647 / Goe1 / Go1 / JCM 11833 / OCM 88) (Methanosarcina frisia).